The chain runs to 113 residues: uncharacterized protein (113 aa).

This is an uncharacterized protein from Saccharomyces cerevisiae (strain ATCC 204508 / S288c) (Baker's yeast).